The primary structure comprises 502 residues: Probable cytosol aminopeptidase (502 aa).

Positions 267 and 272 each coordinate Mn(2+). Residue Lys279 is part of the active site. Asp290, Asp349, and Glu351 together coordinate Mn(2+). Residue Arg353 is part of the active site.

Belongs to the peptidase M17 family. It depends on Mn(2+) as a cofactor.

The protein resides in the cytoplasm. It carries out the reaction Release of an N-terminal amino acid, Xaa-|-Yaa-, in which Xaa is preferably Leu, but may be other amino acids including Pro although not Arg or Lys, and Yaa may be Pro. Amino acid amides and methyl esters are also readily hydrolyzed, but rates on arylamides are exceedingly low.. The enzyme catalyses Release of an N-terminal amino acid, preferentially leucine, but not glutamic or aspartic acids.. Presumably involved in the processing and regular turnover of intracellular proteins. Catalyzes the removal of unsubstituted N-terminal amino acids from various peptides. The protein is Probable cytosol aminopeptidase of Aeromonas hydrophila subsp. hydrophila (strain ATCC 7966 / DSM 30187 / BCRC 13018 / CCUG 14551 / JCM 1027 / KCTC 2358 / NCIMB 9240 / NCTC 8049).